The sequence spans 202 residues: Peptidyl-tRNA hydrolase (202 aa).

Tyr-14 serves as a coordination point for tRNA. His-19 (proton acceptor) is an active-site residue. TRNA-binding residues include Tyr-64, Asn-66, and Asn-112.

The protein belongs to the PTH family. In terms of assembly, monomer.

It localises to the cytoplasm. It catalyses the reaction an N-acyl-L-alpha-aminoacyl-tRNA + H2O = an N-acyl-L-amino acid + a tRNA + H(+). Hydrolyzes ribosome-free peptidyl-tRNAs (with 1 or more amino acids incorporated), which drop off the ribosome during protein synthesis, or as a result of ribosome stalling. Its function is as follows. Catalyzes the release of premature peptidyl moieties from peptidyl-tRNA molecules trapped in stalled 50S ribosomal subunits, and thus maintains levels of free tRNAs and 50S ribosomes. The chain is Peptidyl-tRNA hydrolase from Nitrobacter winogradskyi (strain ATCC 25391 / DSM 10237 / CIP 104748 / NCIMB 11846 / Nb-255).